A 492-amino-acid polypeptide reads, in one-letter code: ATP synthase subunit beta, chloroplastic (492 aa).

170–177 (GGAGVGKT) is a binding site for ATP.

Belongs to the ATPase alpha/beta chains family. In terms of assembly, F-type ATPases have 2 components, CF(1) - the catalytic core - and CF(0) - the membrane proton channel. CF(1) has five subunits: alpha(3), beta(3), gamma(1), delta(1), epsilon(1). CF(0) has four main subunits: a(1), b(1), b'(1) and c(9-12).

Its subcellular location is the plastid. It is found in the chloroplast thylakoid membrane. The enzyme catalyses ATP + H2O + 4 H(+)(in) = ADP + phosphate + 5 H(+)(out). Functionally, produces ATP from ADP in the presence of a proton gradient across the membrane. The catalytic sites are hosted primarily by the beta subunits. The sequence is that of ATP synthase subunit beta, chloroplastic from Huperzia lucidula (Shining clubmoss).